Here is a 346-residue protein sequence, read N- to C-terminus: Hydroxymethylglutaryl-CoA synthase (346 aa).

Residue D28 coordinates (3S)-3-hydroxy-3-methylglutaryl-CoA. The active-site Proton donor/acceptor is E80. Residues C112 and T153 each contribute to the (3S)-3-hydroxy-3-methylglutaryl-CoA site. The active-site Acyl-thioester intermediate is the C112. R199 serves as a coordination point for CoA. Residues T201 and H234 each contribute to the (3S)-3-hydroxy-3-methylglutaryl-CoA site. H234 functions as the Proton donor/acceptor in the catalytic mechanism. K239 lines the CoA pocket. Positions 243, 266, and 296 each coordinate (3S)-3-hydroxy-3-methylglutaryl-CoA.

This sequence belongs to the thiolase-like superfamily. Archaeal HMG-CoA synthase family. As to quaternary structure, interacts with acetoacetyl-CoA thiolase that catalyzes the precedent step in the pathway and with a DUF35 protein. The acetoacetyl-CoA thiolase/HMG-CoA synthase complex channels the intermediate via a fused CoA-binding site, which allows for efficient coupling of the endergonic thiolase reaction with the exergonic HMGCS reaction.

The enzyme catalyses acetoacetyl-CoA + acetyl-CoA + H2O = (3S)-3-hydroxy-3-methylglutaryl-CoA + CoA + H(+). Its pathway is metabolic intermediate biosynthesis; (R)-mevalonate biosynthesis; (R)-mevalonate from acetyl-CoA: step 2/3. Its function is as follows. Catalyzes the condensation of acetyl-CoA with acetoacetyl-CoA to form 3-hydroxy-3-methylglutaryl-CoA (HMG-CoA). Functions in the mevalonate (MVA) pathway leading to isopentenyl diphosphate (IPP), a key precursor for the biosynthesis of isoprenoid compounds that are building blocks of archaeal membrane lipids. This chain is Hydroxymethylglutaryl-CoA synthase, found in Methanothermobacter thermautotrophicus (strain ATCC 29096 / DSM 1053 / JCM 10044 / NBRC 100330 / Delta H) (Methanobacterium thermoautotrophicum).